The sequence spans 209 residues: Glutathione S-transferase F7 (209 aa).

The region spanning 2–83 (AGIKVFGHPA…YIAHFYSDKG (82 aa)) is the GST N-terminal domain. Glutathione-binding positions include 12–13 (ST), 41–42 (HK), 54–55 (KV), and 67–68 (ES). The GST C-terminal domain occupies 90-209 (GSKDIAGIAM…TSRPSAKKVL (120 aa)).

This sequence belongs to the GST superfamily. Phi family.

It is found in the cytoplasm. The protein resides in the cytosol. It catalyses the reaction RX + glutathione = an S-substituted glutathione + a halide anion + H(+). Functionally, may be involved in the conjugation of reduced glutathione to a wide number of exogenous and endogenous hydrophobic electrophiles and have a detoxification role against certain herbicides. The protein is Glutathione S-transferase F7 of Arabidopsis thaliana (Mouse-ear cress).